The following is a 214-amino-acid chain: Leucyl/phenylalanyl-tRNA--protein transferase (214 aa).

The interval 194-214 (FAPPGYSPDPASVVQRSSQTS) is disordered.

The protein belongs to the L/F-transferase family.

It localises to the cytoplasm. It catalyses the reaction N-terminal L-lysyl-[protein] + L-leucyl-tRNA(Leu) = N-terminal L-leucyl-L-lysyl-[protein] + tRNA(Leu) + H(+). The enzyme catalyses N-terminal L-arginyl-[protein] + L-leucyl-tRNA(Leu) = N-terminal L-leucyl-L-arginyl-[protein] + tRNA(Leu) + H(+). It carries out the reaction L-phenylalanyl-tRNA(Phe) + an N-terminal L-alpha-aminoacyl-[protein] = an N-terminal L-phenylalanyl-L-alpha-aminoacyl-[protein] + tRNA(Phe). In terms of biological role, functions in the N-end rule pathway of protein degradation where it conjugates Leu, Phe and, less efficiently, Met from aminoacyl-tRNAs to the N-termini of proteins containing an N-terminal arginine or lysine. The chain is Leucyl/phenylalanyl-tRNA--protein transferase from Cereibacter sphaeroides (strain ATCC 17025 / ATH 2.4.3) (Rhodobacter sphaeroides).